The primary structure comprises 300 residues: MVQALVFAVGIVGNILSFLVILAPVPTFYRVYKKKSTESFQSVPYAVALLSAMLWLYYALLTSDLLLLSINSIGCLVESLYLTVYLLYAPRQAMAFTLKLVCAMNLALFAAVVAALQLLVKATDRRVTLAGGIGASFALAVFVAPLTIIRQVIRTKSVEFMPFWLSFFLTLSAVVWFFYGLLMKDFFVATPNVLGLLFGLAQMVLYVVYKNPKKNSAVSEAAAAQQVEVKDQQQLQMQLQASPAVAPLDVDADADADLEAAAPATPQRPADDDAIDHRSVVVDIPPPPQPPPALPAVEVA.

Residues 1–4 lie on the Extracellular side of the membrane; that stretch reads MVQA. Residues 5–25 traverse the membrane as a helical segment; it reads LVFAVGIVGNILSFLVILAPV. The MtN3/slv 1 domain maps to 8-92; it reads AVGIVGNILS…TVYLLYAPRQ (85 aa). Residues 26–38 lie on the Cytoplasmic side of the membrane; the sequence is PTFYRVYKKKSTE. The helical transmembrane segment at 39–61 threads the bilayer; the sequence is SFQSVPYAVALLSAMLWLYYALL. Topologically, residues 62-67 are extracellular; sequence TSDLLL. Residues 68–88 traverse the membrane as a helical segment; the sequence is LSINSIGCLVESLYLTVYLLY. At 89 to 99 the chain is on the cytoplasmic side; it reads APRQAMAFTLK. A helical membrane pass occupies residues 100-120; the sequence is LVCAMNLALFAAVVAALQLLV. At 121–128 the chain is on the extracellular side; it reads KATDRRVT. The chain crosses the membrane as a helical span at residues 129–149; that stretch reads LAGGIGASFALAVFVAPLTII. Positions 131–213 constitute a MtN3/slv 2 domain; that stretch reads GGIGASFALA…VLYVVYKNPK (83 aa). Over 150–162 the chain is Cytoplasmic; the sequence is RQVIRTKSVEFMP. A helical transmembrane segment spans residues 163-183; sequence FWLSFFLTLSAVVWFFYGLLM. Residues 184–185 lie on the Extracellular side of the membrane; it reads KD. The helical transmembrane segment at 186 to 206 threads the bilayer; it reads FFVATPNVLGLLFGLAQMVLY. At 207-300 the chain is on the cytoplasmic side; sequence VVYKNPKKNS…PPALPAVEVA (94 aa). Residues 256-300 are disordered; the sequence is ADLEAAAPATPQRPADDDAIDHRSVVVDIPPPPQPPPALPAVEVA. Over residues 269–280 the composition is skewed to basic and acidic residues; it reads PADDDAIDHRSV. The segment covering 284–294 has biased composition (pro residues); sequence IPPPPQPPPAL.

The protein belongs to the SWEET sugar transporter family. Forms homooligomers and/or heterooligomers.

The protein resides in the cell membrane. Its function is as follows. Mediates both low-affinity uptake and efflux of sugar across the plasma membrane. In terms of biological role, confers blight susceptibility. Confers TAL effector-mediated susceptibility to Xanthomonas oryzae pv. oryzae. The protein is Bidirectional sugar transporter SWEET12 (SWEET12) of Oryza sativa subsp. japonica (Rice).